A 214-amino-acid chain; its full sequence is ATP phosphoribosyltransferase (214 aa).

It belongs to the ATP phosphoribosyltransferase family. Short subfamily. Heteromultimer composed of HisG and HisZ subunits.

Its subcellular location is the cytoplasm. It carries out the reaction 1-(5-phospho-beta-D-ribosyl)-ATP + diphosphate = 5-phospho-alpha-D-ribose 1-diphosphate + ATP. The protein operates within amino-acid biosynthesis; L-histidine biosynthesis; L-histidine from 5-phospho-alpha-D-ribose 1-diphosphate: step 1/9. Its function is as follows. Catalyzes the condensation of ATP and 5-phosphoribose 1-diphosphate to form N'-(5'-phosphoribosyl)-ATP (PR-ATP). Has a crucial role in the pathway because the rate of histidine biosynthesis seems to be controlled primarily by regulation of HisG enzymatic activity. The polypeptide is ATP phosphoribosyltransferase (Methylobacillus flagellatus (strain ATCC 51484 / DSM 6875 / VKM B-1610 / KT)).